A 616-amino-acid chain; its full sequence is MYKKLAIATLLYSADYLPGVFALGHQVNKLLEEAGKKGDIETCLIVTTSLFNDTLSELAKNLLQSIYTKIVLVEPLDCQEESIQKNSENLALLERPELSFALIKARLWELTQFEQVLYLDSDTLPLNKEFLKLFDIMSKQTTSQVGAIADIGWPDMFNSGVMMLIPDTDTASVLQNYIIENTSIDGSDQGILNQFFNQNCCTDELVKDSFSREWVQLSFTYNVTIPNLGYQSSPAMNYFKPSIKLIHFIGKHKPWSLWSQKNFIKNEYHDQWNEVYEEFKEEHQLNNEVSKPKISDSDKTETPETITPVDAPPSNEPTTNQEIDTISTVEENVDNQNAEPVPNSDHSPAPNPVPLDFTKWLTTFINKDHLTNQPVNESREYSKENDNNIINSSSNRDQESPPNSTQEPNSSYSVVSTQADSDEHQNAEEEDSTTDNASNSGEESHLDDISTAASSNNNVSNQPDNKNFSNSKENNISVEPSPSNPEQKRSTDNIQKPSVSTNDLPDDVEPHTSVDDNIQYLEKDKEGYEEFLPDVYESNAIDNEEEFFDDDARDATEGETKTSAVADKQEDMKLTAEETNQPQQEMPNFKFDWEDSDYLSKVERCFPDDIFEYAVE.

Residues leucine 10, tyrosine 16, and arginine 95 each contribute to the UDP site. Residues leucine 10, tyrosine 16, arginine 95, lysine 104, aspartate 120, aspartate 122, asparagine 158, serine 159, aspartate 185, aspartate 188, and glutamine 189 each coordinate UDP-alpha-D-glucose. Positions 120 and 122 each coordinate UDP. Residues aspartate 120 and aspartate 122 each contribute to the Mn(2+) site. The O-linked (Glc...) tyrosine glycan is linked to tyrosine 230. UDP contacts are provided by histidine 247, glycine 250, and lysine 253. Residue histidine 247 participates in Mn(2+) binding. UDP-alpha-D-glucose-binding residues include glycine 250 and lysine 253. Over residues 283–302 the composition is skewed to basic and acidic residues; that stretch reads HQLNNEVSKPKISDSDKTET. Disordered stretches follow at residues 283-320, 335-354, and 371-516; these read HQLN…PTTN, NQNA…NPVP, and TNQP…SVDD. Positions 377–386 are enriched in basic and acidic residues; the sequence is ESREYSKEND. A compositionally biased stretch (polar residues) spans 400–419; it reads SPPNSTQEPNSSYSVVSTQA. Low complexity predominate over residues 450-461; that stretch reads STAASSNNNVSN. Composition is skewed to polar residues over residues 462 to 485 and 492 to 503; these read QPDN…PSNP and DNIQKPSVSTND. Tyrosine 598 carries O-linked (Glc...) tyrosine glycosylation.

This sequence belongs to the glycosyltransferase 8 family. Glycogenin subfamily. Mn(2+) is required as a cofactor.

It is found in the cytoplasm. Its subcellular location is the vacuole. It carries out the reaction L-tyrosyl-[glycogenin] + UDP-alpha-D-glucose = alpha-D-glucosyl-L-tyrosyl-[glycogenin] + UDP + H(+). It catalyses the reaction [1,4-alpha-D-glucosyl](n)-L-tyrosyl-[glycogenin] + UDP-alpha-D-glucose = [1,4-alpha-D-glucosyl](n+1)-L-tyrosyl-[glycogenin] + UDP + H(+). Self-glucosylating initiator of glycogen synthesis. It catalyzes the formation of a short alpha (1,4)-glucosyl chain covalently attached via a glucose 1-O-tyrosyl linkage to internal tyrosine residues and these chains act as primers for the elongation reaction catalyzed by glycogen synthase. Capable of transferring glucosyl residues to unbound acceptors such as free oligoglucans or oligoglucan derivatives. The polypeptide is Glycogenin-1 (GLG1) (Saccharomyces cerevisiae (strain YJM789) (Baker's yeast)).